A 217-amino-acid chain; its full sequence is N-(5'-phosphoribosyl)anthranilate isomerase (217 aa).

Belongs to the TrpF family.

The enzyme catalyses N-(5-phospho-beta-D-ribosyl)anthranilate = 1-(2-carboxyphenylamino)-1-deoxy-D-ribulose 5-phosphate. Its pathway is amino-acid biosynthesis; L-tryptophan biosynthesis; L-tryptophan from chorismate: step 3/5. The protein is N-(5'-phosphoribosyl)anthranilate isomerase of Chlorobium phaeobacteroides (strain BS1).